The following is a 299-amino-acid chain: Ornithine carbamoyltransferase (299 aa).

Residues 52-55 (STRT), glutamine 79, arginine 103, and 130-133 (HPCQ) each bind carbamoyl phosphate. L-ornithine-binding positions include asparagine 161, aspartate 218, and 222 to 223 (SM). Residues 258 to 259 (CL) and arginine 286 each bind carbamoyl phosphate.

Belongs to the aspartate/ornithine carbamoyltransferase superfamily. OTCase family.

The protein resides in the cytoplasm. The enzyme catalyses carbamoyl phosphate + L-ornithine = L-citrulline + phosphate + H(+). It participates in amino-acid biosynthesis; L-arginine biosynthesis; L-arginine from L-ornithine and carbamoyl phosphate: step 1/3. In terms of biological role, reversibly catalyzes the transfer of the carbamoyl group from carbamoyl phosphate (CP) to the N(epsilon) atom of ornithine (ORN) to produce L-citrulline. The protein is Ornithine carbamoyltransferase of Ruthia magnifica subsp. Calyptogena magnifica.